Here is a 328-residue protein sequence, read N- to C-terminus: Ubiquitin-conjugating enzyme E2 Z (328 aa).

The region spanning 71 to 225 (QCILRIKRDI…IRHETMRVAV (155 aa)) is the UBC core domain. Residue cysteine 160 is the Glycyl thioester intermediate of the active site. The interval 295 to 328 (RLREKCPPEDNDGDSDSDTSSSGTDPDSQGSSQP) is disordered. Positions 312-328 (DTSSSGTDPDSQGSSQP) are enriched in low complexity.

This sequence belongs to the ubiquitin-conjugating enzyme family.

It is found in the cytoplasm. Its subcellular location is the nucleus. The enzyme catalyses S-ubiquitinyl-[E1 ubiquitin-activating enzyme]-L-cysteine + [E2 ubiquitin-conjugating enzyme]-L-cysteine = [E1 ubiquitin-activating enzyme]-L-cysteine + S-ubiquitinyl-[E2 ubiquitin-conjugating enzyme]-L-cysteine.. It participates in protein modification; protein ubiquitination. Catalyzes the covalent attachment of ubiquitin to other proteins. May be involved in apoptosis regulation. The sequence is that of Ubiquitin-conjugating enzyme E2 Z (ube2z) from Danio rerio (Zebrafish).